Consider the following 752-residue polypeptide: Photosystem I P700 chlorophyll a apoprotein A1 (752 aa).

The next 8 helical transmembrane spans lie at 73–96, 159–182, 198–222, 294–312, 349–372, 388–414, 436–458, and 533–551; these read IFAA…FHGA, LYVT…FHYH, LNHH…HVSA, ISHH…GHMY, WHAQ…HHMY, LCIF…IFMV, AIIS…LYVH, and FLVH…LILL. Residues Cys-575 and Cys-584 each contribute to the [4Fe-4S] cluster site. The next 2 membrane-spanning stretches (helical) occupy residues 591–612 and 666–688; these read HVFL…HFSW and LSAY…MFLF. Chlorophyll a' is bound at residue His-677. The chlorophyll a site is built by Met-685 and Tyr-693. Trp-694 serves as a coordination point for phylloquinone. The chain crosses the membrane as a helical span at residues 726-746; sequence AVGVAHYLLGGIATTWAFFHA.

Belongs to the PsaA/PsaB family. The PsaA/B heterodimer binds the P700 chlorophyll special pair and subsequent electron acceptors. PSI consists of a core antenna complex that captures photons, and an electron transfer chain that converts photonic excitation into a charge separation. The cyanobacterial PSI reaction center is composed of one copy each of PsaA,B,C,D,E,F,I,J,K,L,M and X, and forms trimeric complexes. The cofactor is PSI electron transfer chain: 5 chlorophyll a, 1 chlorophyll a', 2 phylloquinones and 3 4Fe-4S clusters. PSI core antenna: 90 chlorophyll a, 22 carotenoids, 3 phospholipids and 1 galactolipid. P700 is a chlorophyll a/chlorophyll a' dimer, A0 is one or more chlorophyll a, A1 is one or both phylloquinones and FX is a shared 4Fe-4S iron-sulfur center..

The protein localises to the cellular thylakoid membrane. The catalysed reaction is reduced [plastocyanin] + hnu + oxidized [2Fe-2S]-[ferredoxin] = oxidized [plastocyanin] + reduced [2Fe-2S]-[ferredoxin]. Functionally, psaA and PsaB bind P700, the primary electron donor of photosystem I (PSI), as well as the electron acceptors A0, A1 and FX. PSI is a plastocyanin/cytochrome c6-ferredoxin oxidoreductase, converting photonic excitation into a charge separation, which transfers an electron from the donor P700 chlorophyll pair to the spectroscopically characterized acceptors A0, A1, FX, FA and FB in turn. Oxidized P700 is reduced on the lumenal side of the thylakoid membrane by plastocyanin or cytochrome c6. The protein is Photosystem I P700 chlorophyll a apoprotein A1 of Mastigocladus laminosus (Fischerella sp.).